A 560-amino-acid chain; its full sequence is 2-isopropylmalate synthase (560 aa).

Residues 30 to 303 (PVWCSVDLRD…DPEIDCSNIE (274 aa)) enclose the Pyruvate carboxyltransferase domain. Positions 39, 242, 244, and 278 each coordinate Mg(2+). Residues 437–560 (QPEGRLRFVD…RVLDVKAGKA (124 aa)) are regulatory domain.

The protein belongs to the alpha-IPM synthase/homocitrate synthase family. LeuA type 2 subfamily. In terms of assembly, homodimer. Mg(2+) serves as cofactor.

The protein localises to the cytoplasm. The catalysed reaction is 3-methyl-2-oxobutanoate + acetyl-CoA + H2O = (2S)-2-isopropylmalate + CoA + H(+). The protein operates within amino-acid biosynthesis; L-leucine biosynthesis; L-leucine from 3-methyl-2-oxobutanoate: step 1/4. Catalyzes the condensation of the acetyl group of acetyl-CoA with 3-methyl-2-oxobutanoate (2-ketoisovalerate) to form 3-carboxy-3-hydroxy-4-methylpentanoate (2-isopropylmalate). In Rhizobium johnstonii (strain DSM 114642 / LMG 32736 / 3841) (Rhizobium leguminosarum bv. viciae), this protein is 2-isopropylmalate synthase.